Here is a 211-residue protein sequence, read N- to C-terminus: Proline-rich 33 kDa extensin-related protein (211 aa).

Residues 1–14 (AILGVAIFAAPSLA) form the signal peptide. 2 stretches are compositionally biased toward pro residues: residues 25-59 (PPVY…PVHK) and 82-93 (HKPPVYKPPVQK). Residues 25 to 211 (PPVYTPPVHK…RHPPVENTGN (187 aa)) form a disordered region. Basic residues-rich tracts occupy residues 101–111 (PVHKPPIHKPP) and 127–139 (PIHK…RPPV). 2 stretches are compositionally biased toward basic and acidic residues: residues 142–159 (PPTE…EHKP) and 167–177 (KTEKPVPEHKP). Positions 179-198 (HLPPIVVRPPPTHKPNPPYG) are enriched in pro residues.

This sequence belongs to the plant proline-rich protein superfamily. ENOD12 family.

It localises to the secreted. The protein localises to the cell wall. The polypeptide is Proline-rich 33 kDa extensin-related protein (Daucus carota (Wild carrot)).